A 106-amino-acid polypeptide reads, in one-letter code: HIG1 domain family member 2A, mitochondrial (106 aa).

An N-acetylalanine modification is found at A2. Residues 20–106 (VIEGLSPTVY…LAVTAMKSRP (87 aa)) enclose the HIG1 domain. A run of 2 helical transmembrane segments spans residues 47–67 (PVVPIGCLATAAALTYGLYSF) and 83–103 (IAAQGFTVAAILLGLAVTAMK). The Mitochondrial matrix segment spans residues 104–106 (SRP).

As to quaternary structure, associates with cytochrome c oxidase (COX, complex IV); proposed complex component.

The protein resides in the mitochondrion membrane. Its subcellular location is the mitochondrion inner membrane. Its function is as follows. Proposed subunit of cytochrome c oxidase (COX, complex IV), which is the terminal component of the mitochondrial respiratory chain that catalyzes the reduction of oxygen to water. May be involved in cytochrome c oxidase activity. May play a role in the assembly of respiratory supercomplexes. This is HIG1 domain family member 2A, mitochondrial (HIGD2A) from Homo sapiens (Human).